The following is a 605-amino-acid chain: Alpha-1,3-galactosidase B (605 aa).

A signal peptide spans 1–19; it reads MKRIIFNFCFVWLAVSAFA. PbH1 repeat units lie at residues 428-450, 451-473, and 484-538; these read CPEV…LFST, PLKT…LLCG, and CRNV…VIED.

It belongs to the glycosyl hydrolase 110 family. B subfamily.

The enzyme catalyses Hydrolysis of terminal, non-reducing branched (1-&gt;3)-alpha-D-galactosidic residues, producing free D-galactose.. The catalysed reaction is Hydrolysis of terminal, non-reducing linear (1-&gt;3)-alpha-D-galactosidic residues, producing free D-galactose.. It carries out the reaction Hydrolysis of terminal, non-reducing alpha-D-galactose residues in alpha-D-galactosides, including galactose oligosaccharides, galactomannans and galactolipids.. In terms of biological role, alpha-galactosidase. Removes both branched alpha-1,3-linked galactose residues of blood group B antigens and linear alpha-1,3-linked galactose structures. The chain is Alpha-1,3-galactosidase B (glaB2) from Phocaeicola vulgatus (strain ATCC 8482 / DSM 1447 / JCM 5826 / CCUG 4940 / NBRC 14291 / NCTC 11154) (Bacteroides vulgatus).